Consider the following 377-residue polypeptide: Multiple sugar-binding transport ATP-binding protein MsmK (377 aa).

The ABC transporter domain maps to L4–I246. G38–S45 is a binding site for ATP.

This sequence belongs to the ABC transporter superfamily.

It localises to the cell membrane. Functionally, involved in a binding protein-dependent transport system responsible for the uptake of melibiose, raffinose and isomaltotriose. Probably responsible for energy coupling to the transport system. This chain is Multiple sugar-binding transport ATP-binding protein MsmK (msmK), found in Streptococcus mutans serotype c (strain ATCC 700610 / UA159).